The sequence spans 327 residues: Porphobilinogen deaminase (327 aa).

Cysteine 251 carries the post-translational modification S-(dipyrrolylmethanemethyl)cysteine.

The protein belongs to the HMBS family. Dipyrromethane is required as a cofactor.

It carries out the reaction 4 porphobilinogen + H2O = hydroxymethylbilane + 4 NH4(+). The protein operates within porphyrin-containing compound metabolism; protoporphyrin-IX biosynthesis; coproporphyrinogen-III from 5-aminolevulinate: step 2/4. Catalyzes the tetrapolymerization of the monopyrrole porphobilinogen (PBG) into the hydroxymethylbilane pre-uroporphyrinogen in several discrete steps. The sequence is that of Porphobilinogen deaminase (HEM3) from Saccharomyces cerevisiae (strain ATCC 204508 / S288c) (Baker's yeast).